A 115-amino-acid chain; its full sequence is uncharacterized protein (115 aa).

The next 2 membrane-spanning stretches (helical) occupy residues 15-35 (FSTQ…EVLF) and 52-72 (FDGV…YYSI).

It is found in the membrane. This is an uncharacterized protein from Saccharomyces cerevisiae (strain ATCC 204508 / S288c) (Baker's yeast).